A 341-amino-acid chain; its full sequence is ATP-dependent 6-phosphofructokinase 3 (341 aa).

ATP is bound by residues G10, 72 to 73 (RV), and 102 to 105 (GEGT). E103 is a binding site for Mg(2+). Substrate contacts are provided by residues 125-127 (TID), R162, 169-171 (MGR), E222, R266, and 272-275 (HVQR). Residue D127 is the Proton acceptor of the active site.

The protein belongs to the phosphofructokinase type A (PFKA) family. Mixed-substrate PFK group III subfamily. As to quaternary structure, homodimer or homotetramer. It depends on Mg(2+) as a cofactor.

Its subcellular location is the cytoplasm. It catalyses the reaction beta-D-fructose 6-phosphate + ATP = beta-D-fructose 1,6-bisphosphate + ADP + H(+). The protein operates within carbohydrate degradation; glycolysis; D-glyceraldehyde 3-phosphate and glycerone phosphate from D-glucose: step 3/4. Its function is as follows. Catalyzes the phosphorylation of D-fructose 6-phosphate to fructose 1,6-bisphosphate by ATP, the first committing step of glycolysis. This chain is ATP-dependent 6-phosphofructokinase 3, found in Streptomyces coelicolor (strain ATCC BAA-471 / A3(2) / M145).